A 187-amino-acid chain; its full sequence is MTDSSNEHETENPSVPNPDNEIQDLQQEIATLKAELKEKNDKYLMVLAESENARKRMQKERQEMMQYAVENALIDFLVPIESMEKALGFASQMSDEVKNWALGFNMILQQFKQVFEEKGIVEYSSVGQKFNPFLHEAVETEETTKVPEGIIVEEFAKGYKIGDRPIRVAKVKVAKSPAPQEKEEEKK.

A compositionally biased stretch (basic and acidic residues) spans 1-11 (MTDSSNEHETE). Residues 1–23 (MTDSSNEHETENPSVPNPDNEIQ) form a disordered region.

Belongs to the GrpE family. In terms of assembly, homodimer.

Its subcellular location is the cytoplasm. Participates actively in the response to hyperosmotic and heat shock by preventing the aggregation of stress-denatured proteins, in association with DnaK and GrpE. It is the nucleotide exchange factor for DnaK and may function as a thermosensor. Unfolded proteins bind initially to DnaJ; upon interaction with the DnaJ-bound protein, DnaK hydrolyzes its bound ATP, resulting in the formation of a stable complex. GrpE releases ADP from DnaK; ATP binding to DnaK triggers the release of the substrate protein, thus completing the reaction cycle. Several rounds of ATP-dependent interactions between DnaJ, DnaK and GrpE are required for fully efficient folding. In Chlamydia felis (strain Fe/C-56) (Chlamydophila felis), this protein is Protein GrpE.